Consider the following 995-residue polypeptide: Zinc finger protein ZFPM1 (995 aa).

Basic residues predominate over residues Met1–Arg14. The interval Met1–Gly103 is disordered. Residues Ser15–Glu36 show a composition bias toward basic and acidic residues. Composition is skewed to acidic residues over residues Ser67–Glu78 and Glu86–Ala95. Phosphoserine is present on residues Ser99 and Ser143. The CCHC FOG-type 1 zinc finger occupies Val249 to Gln282. Zn(2+) contacts are provided by Cys257, Cys260, His273, and Cys278. A Phosphoserine modification is found at Ser286. C2H2-type zinc fingers lie at residues Arg303–His327, Phe333–His355, and Gly361–His384. The interaction with TACC3 stretch occupies residues Thr343–Val354. Residues Ser397, Ser497, and Ser500 each carry the phosphoserine modification. The interval Pro424–Met526 is disordered. Positions Glu509–Thr525 are enriched in low complexity. A CCHC FOG-type 2 zinc finger spans residues Phe584 to Arg617. Residues Cys592, Cys595, His608, and Cys613 each coordinate Zn(2+). Residues Arg616 to Ser694 are disordered. The segment covering Ala630 to Pro652 has biased composition (low complexity). Residues Ser651 and Ser684 each carry the phosphoserine modification. A CCHC FOG-type 3 zinc finger spans residues Glu690–His723. Residues Cys698, Cys701, His714, and Cys719 each coordinate Zn(2+). A disordered region spans residues Ser721 to Thr827. 2 stretches are compositionally biased toward pro residues: residues Arg728–Ala740 and Gly764–Pro779. Residues Leu785–Pro800 are compositionally biased toward low complexity. Residue Ser803 is modified to Phosphoserine. The interaction with CTBP2 stretch occupies residues Pro811 to Arg817. The residue at position 822 (Ser822) is a Phosphoserine. Residues Pro830–Pro863 form a CCHC FOG-type 4 zinc finger. Zn(2+)-binding residues include Cys838, Cys841, His854, and Cys859. Residues Ala868–His891 form a C2H2-type 4 zinc finger. A disordered region spans residues Gly892 to Gly960. Residues Thr908 to Ala922 are compositionally biased toward basic and acidic residues. 2 positions are modified to phosphoserine: Ser925 and Ser927. The CCHC FOG-type 5 zinc-finger motif lies at Gly957 to Ala990. Residues Cys965, Cys968, His981, and Cys986 each coordinate Zn(2+).

It belongs to the FOG (Friend of GATA) family. In terms of assembly, interacts with the N-terminal zinc-finger of GATA1, GATA2 and GATA3. Interacts with corepressor CTBP2; this interaction is however not essential for corepressor activity in erythropoiesis. Interacts with TACC3. In terms of tissue distribution, mainly expressed in hematopoietic tissues. Expressed in the spleen, a primary site of hematopoiesis in the adult mouse, as well as in the liver and testis, but not in the heart, brain, lung, kidney, or skeletal muscle. Among hematopoietic cell lines, it is strongly expressed in erythroid and megakaryocytic cell lines. Expressed at low level in several lymphoid and early myeloid cell lines. Not expressed in mast cell and macrophage lines. Expressed in the heart, where it colocalizes with GATA4, GATA5 and GATA6.

It is found in the nucleus. In terms of biological role, transcription regulator that plays an essential role in erythroid and megakaryocytic cell differentiation. Essential cofactor that acts via the formation of a heterodimer with transcription factors of the GATA family GATA1, GATA2 and GATA3. Such heterodimer can both activate or repress transcriptional activity, depending on the cell and promoter context. The heterodimer formed with GATA proteins is essential to activate expression of genes such as NFE2, ITGA2B, alpha- and beta-globin, while it represses expression of KLF1. May be involved in regulation of some genes in gonads. May also be involved in cardiac development, in a non-redundant way with ZFPM2/FOG2. In Mus musculus (Mouse), this protein is Zinc finger protein ZFPM1 (Zfpm1).